The sequence spans 115 residues: NADH-ubiquinone oxidoreductase chain 3 (115 aa).

3 consecutive transmembrane segments (helical) span residues 3–23 (FALI…ITFW), 55–75 (FFLV…LLPL), and 84–104 (LPLM…SLAY).

This sequence belongs to the complex I subunit 3 family. As to quaternary structure, core subunit of respiratory chain NADH dehydrogenase (Complex I) which is composed of 45 different subunits. Interacts with TMEM186. Interacts with TMEM242.

The protein resides in the mitochondrion inner membrane. It carries out the reaction a ubiquinone + NADH + 5 H(+)(in) = a ubiquinol + NAD(+) + 4 H(+)(out). In terms of biological role, core subunit of the mitochondrial membrane respiratory chain NADH dehydrogenase (Complex I) which catalyzes electron transfer from NADH through the respiratory chain, using ubiquinone as an electron acceptor. Essential for the catalytic activity of complex I. The sequence is that of NADH-ubiquinone oxidoreductase chain 3 from Homo sapiens (Human).